The following is a 166-amino-acid chain: Signal peptidase complex catalytic subunit SEC11 (166 aa).

Topologically, residues 1 to 9 (MNIRQQLTQ) are cytoplasmic. Residues 10–30 (LLTLGYVFASAFMLWKTLSVV) traverse the membrane as a helical; Signal-anchor for type II membrane protein segment. The Lumenal portion of the chain corresponds to 31 to 166 (ANLHSPIVVV…LGLSSLFSNE (136 aa)). Active-site charge relay system residues include Ser44, His83, and Asp108. Residues 152-163 (GLLGLLGLSSLF) form a C-terminal short (CTS) helix region.

Belongs to the peptidase S26B family. Component of the signal peptidase complex (SPC) composed of a catalytic subunit SEC11 and three accessory subunits SPC1, SPC2 and SPC3. The complex induces a local thinning of the ER membrane which is used to measure the length of the signal peptide (SP) h-region of protein substrates. This ensures the selectivity of the complex towards h-regions shorter than 18-20 amino acids. SPC associates with the translocon complex.

The protein resides in the endoplasmic reticulum membrane. The enzyme catalyses Cleavage of hydrophobic, N-terminal signal or leader sequences from secreted and periplasmic proteins.. Catalytic component of the signal peptidase complex (SPC) which catalyzes the cleavage of N-terminal signal sequences from nascent proteins as they are translocated into the lumen of the endoplasmic reticulum. Specifically cleaves N-terminal signal peptides that contain a hydrophobic alpha-helix (h-region) shorter than 18-20 amino acids. This chain is Signal peptidase complex catalytic subunit SEC11 (SEC11), found in Lodderomyces elongisporus (strain ATCC 11503 / CBS 2605 / JCM 1781 / NBRC 1676 / NRRL YB-4239) (Yeast).